The primary structure comprises 55 residues: Large ribosomal subunit protein bL33 (55 aa).

This sequence belongs to the bacterial ribosomal protein bL33 family.

This chain is Large ribosomal subunit protein bL33, found in Bartonella quintana (strain Toulouse) (Rochalimaea quintana).